We begin with the raw amino-acid sequence, 210 residues long: Dynein regulatory complex protein 12 (210 aa).

The tract at residues 1 to 23 is disordered; the sequence is MPPKNKEKGKKSGAQKKKKNWGA. Positions 7–20 are enriched in basic residues; the sequence is EKGKKSGAQKKKKN. A coiled-coil region spans residues 49–161; that stretch reads RDEARRAKAS…EAKYEEILHD (113 aa). Positions 188-210 are disordered; sequence HKEQQRQFGLTPPGSLRPPAPSL.

Belongs to the DRC12 family. In terms of assembly, component of the nexin-dynein regulatory complex (N-DRC).

The protein localises to the cytoplasm. Its subcellular location is the cytoskeleton. It is found in the flagellum axoneme. Functionally, component of the nexin-dynein regulatory complex (N-DRC), a key regulator of ciliary/flagellar motility which maintains the alignment and integrity of the distal axoneme and regulates microtubule sliding in motile axonemes. The chain is Dynein regulatory complex protein 12 from Homo sapiens (Human).